Consider the following 297-residue polypeptide: MVHQVLYRALVSTKWLAESIRSGSLGPGLRVLDASWYSPGTRQARKEYQERHVPGASFFDIEECRDTTSPYEMMLPSEAHFADYVGSLGISNDTHVVVYDGDNLGSFYAPRVWWMFRVFGHRTVSVLNGGFRNWLKEGHPVTSEPSRPEPAVFKATLDRSLLKTYEQVLENLQSKRFQLVDSRAQGRYLGTEPEPDIVGLDSGHIRGSANMPFMNFLTEDGFEKSPEELRAIFQDKKVDLSQPLIATCRKGVTACHIALAAYLCGKPDVAVYDGSWSEWFHQAPPETRVSQGKSGKA.

N6-acetyllysine; alternate is present on K14. N6-succinyllysine; alternate is present on K14. Positions 25–143 (LGPGLRVLDA…WLKEGHPVTS (119 aa)) constitute a Rhodanese 1 domain. The O-linked (GlcNAc) serine glycan is linked to S35. Position 38 is a phosphoserine (S38). N6-acetyllysine; alternate is present on K136. At K136 the chain carries N6-succinyllysine; alternate. A hinge region spans residues 144 to 159 (EPSRPEPAVFKATLDR). Position 163 is an N6-acetyllysine (K163). A Rhodanese 2 domain is found at 173 to 288 (QSKRFQLVDS…WFHQAPPETR (116 aa)). K175 bears the N6-acetyllysine; alternate mark. An N6-succinyllysine; alternate modification is found at K175. Position 187 (R187) interacts with substrate. K224 is subject to N6-acetyllysine; alternate. N6-succinyllysine; alternate is present on K224. Residue K236 is modified to N6-acetyllysine. K237 carries the N6-acetyllysine; alternate modification. At K237 the chain carries N6-succinyllysine; alternate. C248 serves as the catalytic Cysteine persulfide intermediate. K250 contacts substrate.

As to quaternary structure, monomer.

It localises to the mitochondrion matrix. It carries out the reaction thiosulfate + hydrogen cyanide = thiocyanate + sulfite + 2 H(+). Together with MRPL18, acts as a mitochondrial import factor for the cytosolic 5S rRNA. Only the nascent unfolded cytoplasmic form is able to bind to the 5S rRNA. Formation of iron-sulfur complexes and cyanide detoxification. Binds molecular oxygen and sulfur. This chain is Thiosulfate sulfurtransferase (TST), found in Cricetulus griseus (Chinese hamster).